The sequence spans 238 residues: MLEFSSEVSLLDSVKNILLEYGLRFQEPQIEKVDKYIEELLGVPYNLTAHRDLDSAVHKNVVEILLPLKEELKGTLLDVGSGNGVPGLILAIFFSKLKVVLLDSREKSVNFLRGVIEKLDLENVSVVKERAENFSKERREEFDYVTARAVARLNVLVEICTPALKTGGKLLFYKGPSYIEELKEAQRAMKELKVELEKVREYSLKTGERRALLILRKYESSPEKYPRRVGVPFKRPLL.

S-adenosyl-L-methionine-binding positions include glycine 80, alanine 131–glutamate 132, and arginine 148.

Belongs to the methyltransferase superfamily. RNA methyltransferase RsmG family.

It localises to the cytoplasm. Specifically methylates the N7 position of a guanine in 16S rRNA. This is Ribosomal RNA small subunit methyltransferase G from Thermotoga maritima (strain ATCC 43589 / DSM 3109 / JCM 10099 / NBRC 100826 / MSB8).